Here is a 163-residue protein sequence, read N- to C-terminus: HTH-type transcriptional regulator IscR (163 aa).

The HTH rrf2-type domain occupies 2 to 131 (RLTSKGRYAV…NNITLGELVN (130 aa)). Positions 28-51 (LADISERQGISLSYLEQLFSRLRK) form a DNA-binding region, H-T-H motif. Cysteine 92, cysteine 98, and cysteine 104 together coordinate [2Fe-2S] cluster.

The cofactor is [2Fe-2S] cluster.

Regulates the transcription of several operons and genes involved in the biogenesis of Fe-S clusters and Fe-S-containing proteins. This Klebsiella pneumoniae subsp. pneumoniae (strain ATCC 700721 / MGH 78578) protein is HTH-type transcriptional regulator IscR.